Here is a 133-residue protein sequence, read N- to C-terminus: Large ribosomal subunit protein eL32 (133 aa).

Belongs to the eukaryotic ribosomal protein eL32 family.

The chain is Large ribosomal subunit protein eL32 (rpl32) from Dictyostelium discoideum (Social amoeba).